Here is a 408-residue protein sequence, read N- to C-terminus: 1-deoxy-D-xylulose 5-phosphate reductoisomerase (408 aa).

NADPH is bound by residues Thr-19, Gly-20, Ser-21, Ile-22, Gly-45, Asn-47, and Asn-130. Lys-131 serves as a coordination point for 1-deoxy-D-xylulose 5-phosphate. NADPH is bound at residue Glu-132. Asp-156 is a binding site for Mn(2+). 4 residues coordinate 1-deoxy-D-xylulose 5-phosphate: Ser-157, Glu-158, Ser-182, and His-205. Glu-158 contacts Mn(2+). NADPH is bound at residue Gly-211. Residues Ser-218, Asn-223, Lys-224, and Glu-227 each coordinate 1-deoxy-D-xylulose 5-phosphate. Position 227 (Glu-227) interacts with Mn(2+).

This sequence belongs to the DXR family. The cofactor is Mg(2+). Mn(2+) serves as cofactor.

It carries out the reaction 2-C-methyl-D-erythritol 4-phosphate + NADP(+) = 1-deoxy-D-xylulose 5-phosphate + NADPH + H(+). It participates in isoprenoid biosynthesis; isopentenyl diphosphate biosynthesis via DXP pathway; isopentenyl diphosphate from 1-deoxy-D-xylulose 5-phosphate: step 1/6. Catalyzes the NADPH-dependent rearrangement and reduction of 1-deoxy-D-xylulose-5-phosphate (DXP) to 2-C-methyl-D-erythritol 4-phosphate (MEP). This chain is 1-deoxy-D-xylulose 5-phosphate reductoisomerase, found in Gluconobacter oxydans (strain 621H) (Gluconobacter suboxydans).